A 162-amino-acid polypeptide reads, in one-letter code: MSETTSLEDLKGAMEGTSASADANAVPAVQKLDKFGRAYATGKRKNAVARVWIKPGSGRVKINGRDLEVYFARPVLRMILNQPLVVAAREKQYDITATVVGGGLSGQAGAIRHGISRALTYFEPSLRGVLKKEGFLTRDSRVVERKKYGKAKARRSFQFSKR.

Belongs to the universal ribosomal protein uS9 family.

The protein is Small ribosomal subunit protein uS9 of Parvibaculum lavamentivorans (strain DS-1 / DSM 13023 / NCIMB 13966).